The following is a 122-amino-acid chain: Large ribosomal subunit protein uL14 (122 aa).

It belongs to the universal ribosomal protein uL14 family. As to quaternary structure, part of the 50S ribosomal subunit. Forms a cluster with proteins L3 and L19. In the 70S ribosome, L14 and L19 interact and together make contacts with the 16S rRNA in bridges B5 and B8.

Binds to 23S rRNA. Forms part of two intersubunit bridges in the 70S ribosome. In Burkholderia lata (strain ATCC 17760 / DSM 23089 / LMG 22485 / NCIMB 9086 / R18194 / 383), this protein is Large ribosomal subunit protein uL14.